Here is a 380-residue protein sequence, read N- to C-terminus: Cytochrome b (380 aa).

The next 4 helical transmembrane spans lie at 34–54 (FGSL…LLAA), 78–99 (WLIR…YLHI), 114–134 (WNTG…GYVL), and 179–199 (FFTL…IHLT). His84 and His98 together coordinate heme b. His183 and His197 together coordinate heme b. His202 provides a ligand contact to a ubiquinone. The next 4 membrane-spanning stretches (helical) occupy residues 227–247 (TKDI…ALFS), 289–309 (LGGV…PLLH), 321–341 (LSQL…WIGS), and 348–368 (FIII…ILFP).

This sequence belongs to the cytochrome b family. As to quaternary structure, the cytochrome bc1 complex contains 11 subunits: 3 respiratory subunits (MT-CYB, CYC1 and UQCRFS1), 2 core proteins (UQCRC1 and UQCRC2) and 6 low-molecular weight proteins (UQCRH/QCR6, UQCRB/QCR7, UQCRQ/QCR8, UQCR10/QCR9, UQCR11/QCR10 and a cleavage product of UQCRFS1). This cytochrome bc1 complex then forms a dimer. It depends on heme b as a cofactor.

The protein resides in the mitochondrion inner membrane. Functionally, component of the ubiquinol-cytochrome c reductase complex (complex III or cytochrome b-c1 complex) that is part of the mitochondrial respiratory chain. The b-c1 complex mediates electron transfer from ubiquinol to cytochrome c. Contributes to the generation of a proton gradient across the mitochondrial membrane that is then used for ATP synthesis. The polypeptide is Cytochrome b (MT-CYB) (Eudyptes chrysolophus (Macaroni penguin)).